Reading from the N-terminus, the 440-residue chain is Xylose isomerase (440 aa).

Catalysis depends on residues histidine 101 and aspartate 104. Glutamate 232, glutamate 268, histidine 271, aspartate 296, aspartate 307, aspartate 309, and aspartate 339 together coordinate Mg(2+).

The protein belongs to the xylose isomerase family. In terms of assembly, homotetramer. Mg(2+) is required as a cofactor.

The protein localises to the cytoplasm. It carries out the reaction alpha-D-xylose = alpha-D-xylulofuranose. In Cronobacter sakazakii (strain ATCC BAA-894) (Enterobacter sakazakii), this protein is Xylose isomerase.